The sequence spans 712 residues: Polyribonucleotide nucleotidyltransferase (712 aa).

2 residues coordinate Mg(2+): Asp487 and Asp493. The KH domain occupies 554–613; the sequence is PRIEVMNIPVDKIREVIGSGGKVIREIVEKTGAKINIEDDGTVKIASSSGKEIEAARKWI. One can recognise an S1 motif domain in the interval 623 to 691; the sequence is GQIYEGTVVK…ERGKVRLSMK (69 aa).

This sequence belongs to the polyribonucleotide nucleotidyltransferase family. Mg(2+) is required as a cofactor.

The protein resides in the cytoplasm. It catalyses the reaction RNA(n+1) + phosphate = RNA(n) + a ribonucleoside 5'-diphosphate. Functionally, involved in mRNA degradation. Catalyzes the phosphorolysis of single-stranded polyribonucleotides processively in the 3'- to 5'-direction. This chain is Polyribonucleotide nucleotidyltransferase, found in Rhizobium leguminosarum bv. trifolii (strain WSM2304).